The following is a 200-amino-acid chain: Imidazole glycerol phosphate synthase subunit HisH (200 aa).

One can recognise a Glutamine amidotransferase type-1 domain in the interval 3 to 200 (DVALIDAGGA…LRNFLEMSFP (198 aa)). Catalysis depends on cysteine 78, which acts as the Nucleophile. Catalysis depends on residues histidine 179 and glutamate 181.

Heterodimer of HisH and HisF.

It is found in the cytoplasm. The catalysed reaction is 5-[(5-phospho-1-deoxy-D-ribulos-1-ylimino)methylamino]-1-(5-phospho-beta-D-ribosyl)imidazole-4-carboxamide + L-glutamine = D-erythro-1-(imidazol-4-yl)glycerol 3-phosphate + 5-amino-1-(5-phospho-beta-D-ribosyl)imidazole-4-carboxamide + L-glutamate + H(+). It carries out the reaction L-glutamine + H2O = L-glutamate + NH4(+). It participates in amino-acid biosynthesis; L-histidine biosynthesis; L-histidine from 5-phospho-alpha-D-ribose 1-diphosphate: step 5/9. IGPS catalyzes the conversion of PRFAR and glutamine to IGP, AICAR and glutamate. The HisH subunit catalyzes the hydrolysis of glutamine to glutamate and ammonia as part of the synthesis of IGP and AICAR. The resulting ammonia molecule is channeled to the active site of HisF. The chain is Imidazole glycerol phosphate synthase subunit HisH from Xanthomonas euvesicatoria pv. vesicatoria (strain 85-10) (Xanthomonas campestris pv. vesicatoria).